Consider the following 646-residue polypeptide: Serine/threonine-protein kinase sck2 (646 aa).

Disordered regions lie at residues 17–85 and 143–176; these read VSTN…LPEV and GRDI…IQRT. A compositionally biased stretch (polar residues) spans 68-80; sequence SDQSTVGNRNSND. The segment covering 149–165 has biased composition (low complexity); the sequence is SSRDSANVSRSSSMMSS. Residues 266–527 form the Protein kinase domain; it reads FVPLKLIGKG…VEEVMKHPFF (262 aa). ATP is bound by residues 272 to 280 and Lys-295; that span reads IGKGTFGQV. Asp-392 (proton acceptor) is an active-site residue. Residues 528–605 enclose the AGC-kinase C-terminal domain; it reads DGIDWKKLAA…IDASAMDEAF (78 aa). A disordered region spans residues 609-646; the sequence is NSNDSASSISSQDDYSKDNSDMDLNRANDEVFMGQIDP. Residues 610–621 show a composition bias toward low complexity; that stretch reads SNDSASSISSQD. Residues 622–637 show a composition bias toward basic and acidic residues; the sequence is DYSKDNSDMDLNRAND.

This sequence belongs to the protein kinase superfamily. AGC Ser/Thr protein kinase family. PKC subfamily.

It catalyses the reaction L-seryl-[protein] + ATP = O-phospho-L-seryl-[protein] + ADP + H(+). The catalysed reaction is L-threonyl-[protein] + ATP = O-phospho-L-threonyl-[protein] + ADP + H(+). Functionally, protein kinase that is part of growth control pathway which is at least partially redundant with the cAMP pathway. The sequence is that of Serine/threonine-protein kinase sck2 (sck2) from Schizosaccharomyces pombe (strain 972 / ATCC 24843) (Fission yeast).